We begin with the raw amino-acid sequence, 138 residues long: Cysteine desulfuration protein SufE (138 aa).

Catalysis depends on Cys-51, which acts as the Cysteine persulfide intermediate.

The protein belongs to the SufE family. In terms of assembly, homodimer. Interacts with SufS.

It localises to the cytoplasm. The protein operates within cofactor biosynthesis; iron-sulfur cluster biosynthesis. In terms of biological role, participates in cysteine desulfuration mediated by SufS. Cysteine desulfuration mobilizes sulfur from L-cysteine to yield L-alanine and constitutes an essential step in sulfur metabolism for biosynthesis of a variety of sulfur-containing biomolecules. Functions as a sulfur acceptor for SufS, by mediating the direct transfer of the sulfur atom from the S-sulfanylcysteine of SufS, an intermediate product of cysteine desulfuration process. This Salmonella agona (strain SL483) protein is Cysteine desulfuration protein SufE.